An 88-amino-acid polypeptide reads, in one-letter code: MARVTVEDCLDNVDNRFELVMLATKRARQLATGGKEPKVAWENDKPTVVALREIASGLVDENVVQQEDIVEDEPLFAAFDDEANTEAL.

This sequence belongs to the RNA polymerase subunit omega family. The RNAP catalytic core consists of 2 alpha, 1 beta, 1 beta' and 1 omega subunit. When a sigma factor is associated with the core the holoenzyme is formed, which can initiate transcription.

The enzyme catalyses RNA(n) + a ribonucleoside 5'-triphosphate = RNA(n+1) + diphosphate. In terms of biological role, promotes RNA polymerase assembly. Latches the N- and C-terminal regions of the beta' subunit thereby facilitating its interaction with the beta and alpha subunits. The protein is DNA-directed RNA polymerase subunit omega of Pseudomonas aeruginosa (strain LESB58).